Reading from the N-terminus, the 24-residue chain is Citropin-3.1.2 (24 aa).

In terms of tissue distribution, expressed by the dorsal and submental skin glands.

The protein resides in the secreted. The protein is Citropin-3.1.2 of Ranoidea citropa (Australian Blue Mountains tree frog).